Here is a 107-residue protein sequence, read N- to C-terminus: Universal stress protein B homolog (107 aa).

The next 2 membrane-spanning stretches (helical) occupy residues 6–26 (TILF…LTAL) and 86–106 (VREL…AAFI).

It belongs to the universal stress protein B family.

The protein localises to the cell inner membrane. This is Universal stress protein B homolog from Vibrio parahaemolyticus serotype O3:K6 (strain RIMD 2210633).